A 361-amino-acid chain; its full sequence is 1D-myo-inositol 2-acetamido-2-deoxy-alpha-D-glucopyranoside deacetylase (361 aa).

A compositionally biased stretch (pro residues) spans 1–12 (MTTTPQPPPQPD). The segment at 1–27 (MTTTPQPPPQPDETPEGAAGAATAGRD) is disordered. Low complexity predominate over residues 16-25 (EGAAGAATAG). Residues H66, D69, and H207 each coordinate Zn(2+).

This sequence belongs to the MshB deacetylase family. It depends on Zn(2+) as a cofactor.

The enzyme catalyses 1D-myo-inositol 2-acetamido-2-deoxy-alpha-D-glucopyranoside + H2O = 1D-myo-inositol 2-amino-2-deoxy-alpha-D-glucopyranoside + acetate. In terms of biological role, catalyzes the deacetylation of 1D-myo-inositol 2-acetamido-2-deoxy-alpha-D-glucopyranoside (GlcNAc-Ins) in the mycothiol biosynthesis pathway. In Kineococcus radiotolerans (strain ATCC BAA-149 / DSM 14245 / SRS30216), this protein is 1D-myo-inositol 2-acetamido-2-deoxy-alpha-D-glucopyranoside deacetylase.